Here is a 323-residue protein sequence, read N- to C-terminus: o-succinylbenzoate synthase (323 aa).

The active-site Proton donor is the lysine 134. Residues aspartate 162, glutamate 191, and aspartate 214 each coordinate Mg(2+). The Proton acceptor role is filled by lysine 236.

Belongs to the mandelate racemase/muconate lactonizing enzyme family. MenC type 1 subfamily. A divalent metal cation serves as cofactor.

It catalyses the reaction (1R,6R)-6-hydroxy-2-succinyl-cyclohexa-2,4-diene-1-carboxylate = 2-succinylbenzoate + H2O. It participates in quinol/quinone metabolism; 1,4-dihydroxy-2-naphthoate biosynthesis; 1,4-dihydroxy-2-naphthoate from chorismate: step 4/7. It functions in the pathway quinol/quinone metabolism; menaquinone biosynthesis. Converts 2-succinyl-6-hydroxy-2,4-cyclohexadiene-1-carboxylate (SHCHC) to 2-succinylbenzoate (OSB). The sequence is that of o-succinylbenzoate synthase from Yersinia pseudotuberculosis serotype I (strain IP32953).